Consider the following 145-residue polypeptide: 3-hydroxyacyl-[acyl-carrier-protein] dehydratase FabZ (145 aa).

H49 is an active-site residue.

The protein belongs to the thioester dehydratase family. FabZ subfamily.

Its subcellular location is the cytoplasm. The enzyme catalyses a (3R)-hydroxyacyl-[ACP] = a (2E)-enoyl-[ACP] + H2O. Functionally, involved in unsaturated fatty acids biosynthesis. Catalyzes the dehydration of short chain beta-hydroxyacyl-ACPs and long chain saturated and unsaturated beta-hydroxyacyl-ACPs. This is 3-hydroxyacyl-[acyl-carrier-protein] dehydratase FabZ from Rickettsia bellii (strain OSU 85-389).